The following is a 260-amino-acid chain: OCIA domain-containing protein 1 (260 aa).

An OCIA domain is found at 1–110; it reads MDSPLSDGSR…MRLPNSRLGE (110 aa). The segment at 146-260 is disordered; it reads DVYTDEGLNP…KNKYGDSWQD (115 aa). The span at 155–164 shows a compositional bias: polar residues; that stretch reads PSRSTALNLD. Residues 205–215 show a composition bias toward basic and acidic residues; that stretch reads EDLRKKNREGY.

This sequence belongs to the OCIAD1 family.

The sequence is that of OCIA domain-containing protein 1 from Drosophila pseudoobscura pseudoobscura (Fruit fly).